The primary structure comprises 694 residues: Elongation factor G (694 aa).

The 275-residue stretch at 12–286 folds into the tr-type G domain; sequence SKLRNIGIMA…AVVDYLPSPI (275 aa). GTP is bound by residues 21–28, 85–89, and 139–142; these read AHIDAGKT, DTPGH, and NKMD.

It belongs to the TRAFAC class translation factor GTPase superfamily. Classic translation factor GTPase family. EF-G/EF-2 subfamily.

It localises to the cytoplasm. In terms of biological role, catalyzes the GTP-dependent ribosomal translocation step during translation elongation. During this step, the ribosome changes from the pre-translocational (PRE) to the post-translocational (POST) state as the newly formed A-site-bound peptidyl-tRNA and P-site-bound deacylated tRNA move to the P and E sites, respectively. Catalyzes the coordinated movement of the two tRNA molecules, the mRNA and conformational changes in the ribosome. This is Elongation factor G from Pseudothermotoga lettingae (strain ATCC BAA-301 / DSM 14385 / NBRC 107922 / TMO) (Thermotoga lettingae).